The following is a 138-amino-acid chain: Protein Rrf1 (138 aa).

The 113-residue stretch at 4-116 (RILVVQEDPD…LLLALVDRAL (113 aa)) folds into the Response regulatory domain. D13 and D53 each carry 4-aspartylphosphate.

May be involved in regulation of gene transcription. Belongs to the family of response regulators, and members of this family involved in the regulation of gene transcription are two-domain proteins. This protein contains only the N-terminal phosphorylation domain and not the C-terminal DNA-binding domain but it may bind to Rrf2 protein and the latter may bind to DNA. The polypeptide is Protein Rrf1 (rrf1) (Nitratidesulfovibrio vulgaris (strain ATCC 29579 / DSM 644 / CCUG 34227 / NCIMB 8303 / VKM B-1760 / Hildenborough) (Desulfovibrio vulgaris)).